Here is a 34-residue protein sequence, read N- to C-terminus: Photosystem II reaction center protein M (34 aa).

Residues 7 to 27 (GFVASLLFVLVPTVFLIILFI) form a helical membrane-spanning segment.

This sequence belongs to the PsbM family. PSII is composed of 1 copy each of membrane proteins PsbA, PsbB, PsbC, PsbD, PsbE, PsbF, PsbH, PsbI, PsbJ, PsbK, PsbL, PsbM, PsbT, PsbX, PsbY, PsbZ, Psb30/Ycf12, peripheral proteins PsbO, CyanoQ (PsbQ), PsbU, PsbV and a large number of cofactors. It forms dimeric complexes.

It localises to the cellular thylakoid membrane. Functionally, one of the components of the core complex of photosystem II (PSII). PSII is a light-driven water:plastoquinone oxidoreductase that uses light energy to abstract electrons from H(2)O, generating O(2) and a proton gradient subsequently used for ATP formation. It consists of a core antenna complex that captures photons, and an electron transfer chain that converts photonic excitation into a charge separation. This subunit is found at the monomer-monomer interface. In Synechococcus sp. (strain WH7803), this protein is Photosystem II reaction center protein M.